Consider the following 397-residue polypeptide: Elongation factor Tu (397 aa).

The 198-residue stretch at 10-207 (KPHVNIGTIG…AVDESIPEPV (198 aa)) folds into the tr-type G domain. The segment at 19 to 26 (GHVDHGKT) is G1. 19–26 (GHVDHGKT) is a binding site for GTP. Mg(2+) is bound at residue threonine 26. The tract at residues 63 to 67 (GITIN) is G2. The segment at 84–87 (DAPG) is G3. GTP contacts are provided by residues 84–88 (DAPGH) and 139–142 (NKSD). The segment at 139 to 142 (NKSD) is G4. A G5 region spans residues 177–179 (SGL).

It belongs to the TRAFAC class translation factor GTPase superfamily. Classic translation factor GTPase family. EF-Tu/EF-1A subfamily. As to quaternary structure, monomer.

The protein localises to the cytoplasm. It catalyses the reaction GTP + H2O = GDP + phosphate + H(+). In terms of biological role, GTP hydrolase that promotes the GTP-dependent binding of aminoacyl-tRNA to the A-site of ribosomes during protein biosynthesis. The protein is Elongation factor Tu of Clavibacter sepedonicus (Clavibacter michiganensis subsp. sepedonicus).